The primary structure comprises 741 residues: MEHTYQYAWVIPLLPLPVILSMGFGLFLIPIATKNFRRIWAFPSVLLLSIAMVFSVQLSIQQINGSSIYQYLWSWTINNDFSLEFGYLIDPLTSIMLMLITTVGILVLIYSDGYMSHDEGYLRFFIYISFFNISMLGLVTSSNLIQIYFFWELVGMCSYLLIGFWFTRPIAASACQKAFVTNRIGDFGLLLGILGFFWITGSLEFRDLFQTANNWIPNNGTTSLLTTLCAFLLFLGAVAKSAQFPLHVWLPDAMEGPTPISALIHAATMVAAGIFLLARLLPLFISLPLIMTFISLVGTITLFLGATLALAQRDIKRTLAYSTMSQLGYMMLALGIGSYQAALFHLITHAYSKALLFLGSGSIIHSMEPLVGYSPDKSQNMALMGGLRKYIPITRTAFLWGTLSICGIPPLACFWSKDEILSNSWLYSPFFGIIASFTAGLTAFYMFRIYLLTFDGYFRFHFQNYSSTKEGSLYSISLWGNRIPKGVSKDFVLSTTKSEVYFFSQNISISKGQGNTRNRIESFSTSFGSKNVFTYPHETGNTMLFPLLILLLFTFFIGFIGIPFDNETMDNGIAGVTILSKWLIPSINFTQESSNSSINSYEFITNAISSVSLVILGLFIAYIFYGSAYSFFQNLDLQNSFYKGSPKKNFFYQVKKKIYSWSYNRGYIDIFYSRLFTLGIRGLTELTEFFDKGVIDGITNGVGLASFCIGEEIKYVGGGRISSYLFFFLCYVSVFLFFFLS.

The next 16 membrane-spanning stretches (helical) occupy residues 9 to 29 (WVIPLLPLPVILSMGFGLFLI), 39 to 59 (IWAFPSVLLLSIAMVFSVQLS), 89 to 109 (IDPLTSIMLMLITTVGILVLI), 125 to 145 (FIYISFFNISMLGLVTSSNLI), 147 to 167 (IYFFWELVGMCSYLLIGFWFT), 184 to 204 (IGDFGLLLGILGFFWITGSLE), 216 to 238 (IPNNGTTSLLTTLCAFLLFLGAV), 258 to 278 (TPISALIHAATMVAAGIFLLA), 280 to 300 (LLPLFISLPLIMTFISLVGTI), 327 to 347 (LGYMMLALGIGSYQAALFHLI), 354 to 374 (ALLFLGSGSIIHSMEPLVGYS), 396 to 416 (TAFLWGTLSICGIPPLACFWS), 425 to 445 (WLYSPFFGIIASFTAGLTAFY), 544 to 564 (LFPLLILLLFTFFIGFIGIPF), 612 to 632 (SLVILGLFIAYIFYGSAYSFF), and 721 to 741 (ISSYLFFFLCYVSVFLFFFLS).

This sequence belongs to the complex I subunit 5 family. In terms of assembly, NDH is composed of at least 16 different subunits, 5 of which are encoded in the nucleus.

Its subcellular location is the plastid. The protein resides in the chloroplast thylakoid membrane. The catalysed reaction is a plastoquinone + NADH + (n+1) H(+)(in) = a plastoquinol + NAD(+) + n H(+)(out). It catalyses the reaction a plastoquinone + NADPH + (n+1) H(+)(in) = a plastoquinol + NADP(+) + n H(+)(out). Its function is as follows. NDH shuttles electrons from NAD(P)H:plastoquinone, via FMN and iron-sulfur (Fe-S) centers, to quinones in the photosynthetic chain and possibly in a chloroplast respiratory chain. The immediate electron acceptor for the enzyme in this species is believed to be plastoquinone. Couples the redox reaction to proton translocation, and thus conserves the redox energy in a proton gradient. The chain is NAD(P)H-quinone oxidoreductase subunit 5, chloroplastic (ndhF) from Brachypodium distachyon (Purple false brome).